The chain runs to 168 residues: Chemoreceptor glutamine deamidase CheD (168 aa).

It belongs to the CheD family. As to quaternary structure, forms a complex with CheC.

The enzyme catalyses L-glutaminyl-[protein] + H2O = L-glutamyl-[protein] + NH4(+). Deamidates glutamine residues to glutamate on methyl-accepting chemotaxis receptors (MCPs). CheD-mediated MCP deamidation is required for productive communication of the conformational signals of the chemoreceptors to the CheA kinase. The chain is Chemoreceptor glutamine deamidase CheD from Bacillus licheniformis (strain ATCC 14580 / DSM 13 / JCM 2505 / CCUG 7422 / NBRC 12200 / NCIMB 9375 / NCTC 10341 / NRRL NRS-1264 / Gibson 46).